The sequence spans 210 residues: Secreted effector protein SteA (210 aa).

The protein localises to the secreted. Its subcellular location is the host cytoplasm. Functionally, effector proteins function to alter host cell physiology and promote bacterial survival in host tissues. Could be required for passage of bacteria from the peritoneal cavity into the spleen, for survival and replication within host cells, or for avoiding host immune response. In Salmonella typhimurium (strain 14028s / SGSC 2262), this protein is Secreted effector protein SteA (steA).